We begin with the raw amino-acid sequence, 578 residues long: Tetratricopeptide repeat protein 39A (578 aa).

3 TPR repeats span residues 280-313 (AIFL…QQHW), 470-503 (CLVK…EKKI), and 511-544 (PNAL…YKNY).

It belongs to the TTC39 family.

In Mus musculus (Mouse), this protein is Tetratricopeptide repeat protein 39A (Ttc39a).